A 422-amino-acid chain; its full sequence is L-threonine dehydratase biosynthetic IlvA (422 aa).

Lys56 is modified (N6-(pyridoxal phosphate)lysine). Pyridoxal 5'-phosphate contacts are provided by residues Asn83, 189–193 (GGGGL), and Ser315. Residues 339 to 413 (HYFILNFPQR…FDKSNIYINE (75 aa)) form the ACT-like domain.

Belongs to the serine/threonine dehydratase family. Homotetramer. The cofactor is pyridoxal 5'-phosphate.

The enzyme catalyses L-threonine = 2-oxobutanoate + NH4(+). It participates in amino-acid biosynthesis; L-isoleucine biosynthesis; 2-oxobutanoate from L-threonine: step 1/1. In terms of biological role, catalyzes the anaerobic formation of alpha-ketobutyrate and ammonia from threonine in a two-step reaction. The first step involved a dehydration of threonine and a production of enamine intermediates (aminocrotonate), which tautomerizes to its imine form (iminobutyrate). Both intermediates are unstable and short-lived. The second step is the nonenzymatic hydrolysis of the enamine/imine intermediates to form 2-ketobutyrate and free ammonia. In the low water environment of the cell, the second step is accelerated by RidA. The polypeptide is L-threonine dehydratase biosynthetic IlvA (ilvA) (Staphylococcus saprophyticus subsp. saprophyticus (strain ATCC 15305 / DSM 20229 / NCIMB 8711 / NCTC 7292 / S-41)).